A 314-amino-acid polypeptide reads, in one-letter code: Deoxyribonuclease-1-like 1 (314 aa).

A signal peptide spans 1 to 37 (MPFGQPGFLWRVPDAHIAMRGLVMAPLLILLVGGTEA). Asn102 carries N-linked (GlcNAc...) asparagine glycosylation. The active site involves Glu113. The N-linked (GlcNAc...) asparagine glycan is linked to Asn133. The active site involves His164. A disulfide bridge links Cys203 with Cys240. Asn239 carries an N-linked (GlcNAc...) asparagine glycan.

The protein belongs to the DNase I family. As to expression, highly expressed in heart and skeletal muscles. Low expression in brain and thymus. Intermediated expression in other tissues.

Its subcellular location is the endoplasmic reticulum. The polypeptide is Deoxyribonuclease-1-like 1 (Dnase1l1) (Mus musculus (Mouse)).